The sequence spans 150 residues: Large ribosomal subunit protein bL9 (150 aa).

It belongs to the bacterial ribosomal protein bL9 family.

Its function is as follows. Binds to the 23S rRNA. This is Large ribosomal subunit protein bL9 from Polaromonas sp. (strain JS666 / ATCC BAA-500).